The primary structure comprises 1728 residues: Nebulin-related-anchoring protein (1728 aa).

In terms of domain architecture, LIM zinc-binding spans 4–64 (QACSRCGYGV…HAHNPKNNTF (61 aa)). Nebulin repeat units follow at residues 173-200 (TPAYQRAKAANQLASQVQYKRGHDERVS), 201-235 (TFTPVADTPELLRAKAGGQLQNDVRYTEDGGQQRG), 244-271 (TPAYQIAKRATELASDVRYHQQYHREMK), 313-340 (TPAYQNAKKANELVSDIKYRQDFHKMKG), 345-379 (HSLAAQDNLVLKRAQSVSKLVSEVEYKKGLENSKG), 386-414 (ETPQFRNVSKISKFTSDNKYKENYQTQLR), 416-450 (HYDGVGMDRRMLHALKVGSLASNVAYKADYKHDVV), 484-518 (KFSSVTNTPQIVQAKINAQQLSHVNYRADYERNKL), 519-553 (NYTLPQDAPQLLKAKANAELFSEVKYKEGWQKTKG), 555-589 (GFEMKLDAMSLLAAKASGELASSVKYKEEYEKMKG), 599-623 (LLHSLQVAKMSSEVEYKKGFEESKT), 624-658 (HFNLPMDMVNLRHAKKAQALASDLDYRKKLHDYTV), 659-689 (LPEDMKTQWAKKAYGLQSELQYKADLAWMRG), 699-721 (NLEQAKKAGQLISEKNYRQRVDE), 723-757 (KFTSVADSSQMEHAKKSQGLQNAVAYKAGNEQSVH), 758-792 (QYTISKDEPLFLRARANAAQLSETLYKSSWEKQKA), 794-828 (GFELRLDSLAFLTAKAKRDLASEVKYKEDYERSRG), 841-866 (QMSHSLQMSKLQSDLEYKKGFEDTRS), 867-893 (QCHISLDMVHLVHARQAQHLATDVGYR), 898-932 (CFTALPTDMKVEWAKKAYGLQSDNQYRADMKWMKG), 943-960 (VEQAKKAGELISEKKYRQ), 966-1000 (KFTSIKDTPEMVQARISYTQAVDRLYREQGENVKH), 1001-1035 (HYTQTADLPEVLLAKLNAMNISETRYKESWSRLRD), 1037-1071 (GYKLRLDALPFQAAKASSEVISDYKYKEAFERMKG), 1075-1109 (GSRSLEDDLSLAHSVHATSLQSDVNYKKGFEHAKA), 1110-1136 (HFHLPLDMVTLVHAKKAQTLASDQDYR), 1141-1175 (QHTVLAEDLRLSCAKKAHKLQSENLYRSDLNFMRG), 1180-1203 (VPGTLEIEGRKKASELISESKYRQ), 1209-1243 (KYTAVTDTPNLLHAKYSNQITNERLYKAAGEDARH), 1244-1278 (QYTMTLGLPEFIRAKTNAANLSEAKYKEAWHNLRA), 1280-1314 (GYKLTIDALPFQAARASGDIASDFLYRHEFVKERG), 1318-1352 (GVRNVSDDPRLLHCLRMGQLQSENQYRKEAASSQA), 1353-1379 (QCHLPMDMMYLVHARKAQALASDHDYR), 1384-1418 (EFTALPEDLKMAWAKKAHALQSEFRYKADLMGMKG), 1425-1446 (QSPQIESAKKAGDLISETKYRK), 1452-1478 (KFTTVVDSPDLIHAKESYMHCNERLYR), 1487-1521 (RYTPIPDHPDFTRARMNAMHLSDKVYRNAWEQSRA), 1523-1557 (GYDFRLDAIPFQTARVSRDIASDFRYKEAFLRDRG), 1561-1595 (GYRSISDDPRTTHFLRVGRLQSDNEYRKAFAKGRS), 1596-1630 (QFHSRADQPGFLQAKRSQQLASDVLYRQPLPQHTS), and 1637-1661 (LKHARKAHQLQSDVKYKSDLNLTRG). The residue at position 203 (Thr-203) is a Phosphothreonine. Ser-1078 is modified (phosphoserine).

In terms of assembly, interacts with actin, alpha-actinin, KLHL41, TLN1 and VCL. Interacts with CSRP3. As to expression, expressed in cardiac and skeletal muscle. Not detected in kidney, spleen, liver, brain, lung, stomach or uterus.

May be involved in anchoring the terminal actin filaments in the myofibril to the membrane and in transmitting tension from the myofibrils to the extracellular matrix. This Mus musculus (Mouse) protein is Nebulin-related-anchoring protein.